Here is a 512-residue protein sequence, read N- to C-terminus: Maturase K (512 aa).

It belongs to the intron maturase 2 family. MatK subfamily.

It is found in the plastid. Its subcellular location is the chloroplast. In terms of biological role, usually encoded in the trnK tRNA gene intron. Probably assists in splicing its own and other chloroplast group II introns. The sequence is that of Maturase K from Amorphophallus titanum (Titan arum).